Here is a 411-residue protein sequence, read N- to C-terminus: Squalene synthase (411 aa).

2 helical membrane-spanning segments follow: residues 281-301 and 388-408; these read SIFR…AMCY and SPVL…QLSG.

Belongs to the phytoene/squalene synthase family. Requires Mg(2+) as cofactor.

Its subcellular location is the endoplasmic reticulum membrane. The enzyme catalyses 2 (2E,6E)-farnesyl diphosphate + NADPH + H(+) = squalene + 2 diphosphate + NADP(+). The catalysed reaction is 2 (2E,6E)-farnesyl diphosphate + NADH + H(+) = squalene + 2 diphosphate + NAD(+). It participates in terpene metabolism; lanosterol biosynthesis; lanosterol from farnesyl diphosphate: step 1/3. The polypeptide is Squalene synthase (Nicotiana benthamiana).